Here is an 88-residue protein sequence, read N- to C-terminus: uncharacterized protein (88 aa).

This is an uncharacterized protein from Vaccinia virus (strain Copenhagen) (VACV).